The sequence spans 500 residues: Histidine ammonia-lyase (500 aa).

Residues 141–143 constitute a cross-link (5-imidazolinone (Ala-Gly)); the sequence is ASG. Residue S142 is modified to 2,3-didehydroalanine (Ser).

The protein belongs to the PAL/histidase family. Post-translationally, contains an active site 4-methylidene-imidazol-5-one (MIO), which is formed autocatalytically by cyclization and dehydration of residues Ala-Ser-Gly.

It is found in the cytoplasm. The enzyme catalyses L-histidine = trans-urocanate + NH4(+). The protein operates within amino-acid degradation; L-histidine degradation into L-glutamate; N-formimidoyl-L-glutamate from L-histidine: step 1/3. The protein is Histidine ammonia-lyase of Shouchella clausii (strain KSM-K16) (Alkalihalobacillus clausii).